Reading from the N-terminus, the 211-residue chain is Beta-crystallin B3 (211 aa).

Residue Met1 is modified to N-acetylmethionine. At Ala2 the chain carries N-acetylalanine; in Beta-crystallin B3, N-terminally processed. An N-terminal arm region spans residues 2-23; sequence AEQHSTPEQAAAGKSHGGLGGS. Beta/gamma crystallin 'Greek key' domains are found at residues 24 to 63 and 64 to 108; these read YKVIVYEMENFQGKRCELTAECPNLTESLLEKVGSIQVES and GPWL…RPLH. The connecting peptide stretch occupies residues 109 to 113; the sequence is IDGPD. Beta/gamma crystallin 'Greek key' domains are found at residues 114–155 and 156–198; these read HKLH…RAIN and GTWV…RRIR. Positions 200-211 are C-terminal arm; that stretch reads QKWHKRGVFLSS.

It belongs to the beta/gamma-crystallin family. Homo/heterodimer, or complexes of higher-order. The structure of beta-crystallin oligomers seems to be stabilized through interactions between the N-terminal arms.

Its function is as follows. Crystallins are the dominant structural components of the vertebrate eye lens. The sequence is that of Beta-crystallin B3 (CRYBB3) from Bos taurus (Bovine).